Consider the following 380-residue polypeptide: L-lactate dehydrogenase (380 aa).

The FMN hydroxy acid dehydrogenase domain occupies 1-380 (MIISSPNDYR…TRDSLVGLPR (380 aa)). Y24 contributes to the substrate binding site. FMN-binding residues include S106 and Q127. Y129 contributes to the substrate binding site. T155 contacts FMN. A substrate-binding site is contributed by R164. Residue K251 participates in FMN binding. Residue H275 is the Proton acceptor of the active site. R278 is a substrate binding site. 306-330 (DSGIRTGLDVVRMLALGAKGVLLGR) provides a ligand contact to FMN.

This sequence belongs to the FMN-dependent alpha-hydroxy acid dehydrogenase family. FMN is required as a cofactor.

The protein resides in the cell inner membrane. It carries out the reaction (S)-lactate + A = pyruvate + AH2. Catalyzes the conversion of L-lactate to pyruvate. Is coupled to the respiratory chain. This is L-lactate dehydrogenase from Azorhizobium caulinodans (strain ATCC 43989 / DSM 5975 / JCM 20966 / LMG 6465 / NBRC 14845 / NCIMB 13405 / ORS 571).